Reading from the N-terminus, the 170-residue chain is Crossover junction endodeoxyribonuclease RuvC (170 aa).

Catalysis depends on residues Asp-9, Glu-70, and Asp-145. Asp-9, Glu-70, and Asp-145 together coordinate Mg(2+).

Belongs to the RuvC family. In terms of assembly, homodimer which binds Holliday junction (HJ) DNA. The HJ becomes 2-fold symmetrical on binding to RuvC with unstacked arms; it has a different conformation from HJ DNA in complex with RuvA. In the full resolvosome a probable DNA-RuvA(4)-RuvB(12)-RuvC(2) complex forms which resolves the HJ. Requires Mg(2+) as cofactor.

Its subcellular location is the cytoplasm. The enzyme catalyses Endonucleolytic cleavage at a junction such as a reciprocal single-stranded crossover between two homologous DNA duplexes (Holliday junction).. Its function is as follows. The RuvA-RuvB-RuvC complex processes Holliday junction (HJ) DNA during genetic recombination and DNA repair. Endonuclease that resolves HJ intermediates. Cleaves cruciform DNA by making single-stranded nicks across the HJ at symmetrical positions within the homologous arms, yielding a 5'-phosphate and a 3'-hydroxyl group; requires a central core of homology in the junction. The consensus cleavage sequence is 5'-(A/T)TT(C/G)-3'. Cleavage occurs on the 3'-side of the TT dinucleotide at the point of strand exchange. HJ branch migration catalyzed by RuvA-RuvB allows RuvC to scan DNA until it finds its consensus sequence, where it cleaves and resolves the cruciform DNA. In Chlamydia trachomatis serovar L2 (strain ATCC VR-902B / DSM 19102 / 434/Bu), this protein is Crossover junction endodeoxyribonuclease RuvC.